Here is a 110-residue protein sequence, read N- to C-terminus: Ig kappa chain V region 3547 (110 aa).

The framework-1 stretch occupies residues 1-23 (AYDMTQTPSSVSAAVGGTVTINC). The interval 24-34 (QASEDISANLA) is complementarity-determining-1. The tract at residues 35 to 49 (WYQQKPGQPPKLLIY) is framework-2. Positions 50–56 (AASDLAS) are complementarity-determining-2. The segment at 57–88 (GVPSRFKGSGSGTEYTLTISGVQCADAATYYC) is framework-3. A complementarity-determining-3 region spans residues 89–99 (QSADYSGSAVT). The interval 100 to 109 (FGGGTEVVVK) is framework-4.

The chain is Ig kappa chain V region 3547 from Oryctolagus cuniculus (Rabbit).